We begin with the raw amino-acid sequence, 214 residues long: Redox-sensing transcriptional repressor Rex (214 aa).

The H-T-H motif DNA-binding region spans 16–55 (IYFRYLNVLKDANKQRVSSTELSEAVQVDSATIRRDFSYF). Position 90–95 (90–95 (GVGSLG)) interacts with NAD(+).

This sequence belongs to the transcriptional regulatory Rex family. As to quaternary structure, homodimer.

Its subcellular location is the cytoplasm. In terms of biological role, modulates transcription in response to changes in cellular NADH/NAD(+) redox state. The chain is Redox-sensing transcriptional repressor Rex from Limosilactobacillus reuteri (strain DSM 20016) (Lactobacillus reuteri).